Reading from the N-terminus, the 329-residue chain is D-alanine--D-alanine ligase (329 aa).

Residues 120–326 (KLWLSAIGIP…FADYLEQILR (207 aa)) form the ATP-grasp domain. Residue 150–205 (ALAKWGKVFIKAASQGSSVGCYSASNEADLVKGIADAFGYSEQVLIEKAVKPRELE) coordinates ATP. Residues D280, E293, and N295 each coordinate Mg(2+).

It belongs to the D-alanine--D-alanine ligase family. It depends on Mg(2+) as a cofactor. Mn(2+) is required as a cofactor.

It is found in the cytoplasm. The enzyme catalyses 2 D-alanine + ATP = D-alanyl-D-alanine + ADP + phosphate + H(+). The protein operates within cell wall biogenesis; peptidoglycan biosynthesis. Functionally, cell wall formation. This is D-alanine--D-alanine ligase from Aeromonas hydrophila subsp. hydrophila (strain ATCC 7966 / DSM 30187 / BCRC 13018 / CCUG 14551 / JCM 1027 / KCTC 2358 / NCIMB 9240 / NCTC 8049).